The sequence spans 512 residues: Glutathione-binding protein GsiB (512 aa).

The first 26 residues, 1–26, serve as a signal peptide directing secretion; that stretch reads MARAVHRSGLVALGIATALMASCAFA.

It belongs to the bacterial solute-binding protein 5 family. As to quaternary structure, the complex is composed of two ATP-binding proteins (GsiA), two transmembrane proteins (GsiC and GsiD) and a solute-binding protein (GsiB).

Its subcellular location is the periplasm. Part of the ABC transporter complex GsiABCD involved in glutathione import. Binds glutathione. In Escherichia coli O6:K15:H31 (strain 536 / UPEC), this protein is Glutathione-binding protein GsiB.